The sequence spans 104 residues: Integration host factor subunit beta (104 aa).

This sequence belongs to the bacterial histone-like protein family. As to quaternary structure, heterodimer of an alpha and a beta chain.

This protein is one of the two subunits of integration host factor, a specific DNA-binding protein that functions in genetic recombination as well as in transcriptional and translational control. This is Integration host factor subunit beta from Chromobacterium violaceum (strain ATCC 12472 / DSM 30191 / JCM 1249 / CCUG 213 / NBRC 12614 / NCIMB 9131 / NCTC 9757 / MK).